The following is a 181-amino-acid chain: uncharacterized protein (181 aa).

This is an uncharacterized protein from Homo sapiens (Human).